Consider the following 183-residue polypeptide: Ribosome-recycling factor (183 aa).

The protein belongs to the RRF family.

Its subcellular location is the cytoplasm. In terms of biological role, responsible for the release of ribosomes from messenger RNA at the termination of protein biosynthesis. May increase the efficiency of translation by recycling ribosomes from one round of translation to another. This is Ribosome-recycling factor from Mycoplasma genitalium (strain ATCC 33530 / DSM 19775 / NCTC 10195 / G37) (Mycoplasmoides genitalium).